The primary structure comprises 123 residues: uncharacterized protein (123 aa).

The interval 34-123 is disordered; it reads PEKISQTVKK…MNRDGGVKKE (90 aa). Composition is skewed to basic and acidic residues over residues 50–60, 74–100, and 107–123; these read KKIDENKDKSP, TAKD…EFSQ, and EETR…VKKE.

The protein resides in the mitochondrion. This is an uncharacterized protein from Schizosaccharomyces pombe (strain 972 / ATCC 24843) (Fission yeast).